The sequence spans 514 residues: Peptide chain release factor 3 (514 aa).

In terms of domain architecture, tr-type G spans 8 to 268 (KKRRTFAIIS…TFLKFAPEPH (261 aa)). GTP-binding positions include 17–24 (SHPDAGKT), 85–89 (DTPGH), and 139–142 (NKLD).

Belongs to the TRAFAC class translation factor GTPase superfamily. Classic translation factor GTPase family. PrfC subfamily.

The protein resides in the cytoplasm. In terms of biological role, increases the formation of ribosomal termination complexes and stimulates activities of RF-1 and RF-2. It binds guanine nucleotides and has strong preference for UGA stop codons. It may interact directly with the ribosome. The stimulation of RF-1 and RF-2 is significantly reduced by GTP and GDP, but not by GMP. The polypeptide is Peptide chain release factor 3 (Streptococcus pneumoniae serotype 19F (strain G54)).